Here is a 548-residue protein sequence, read N- to C-terminus: ATP synthase subunit alpha, mitochondrial (548 aa).

209–216 contributes to the ATP binding site; the sequence is GDRQTGKT.

The protein belongs to the ATPase alpha/beta chains family. As to quaternary structure, F-type ATPases have 2 components, CF(1) - the catalytic core - and CF(0) - the membrane proton channel. CF(1) has five subunits: alpha(3), beta(3), gamma(1), delta(1), epsilon(1). CF(0) has three main subunits: a, b and c.

The protein resides in the mitochondrion. The protein localises to the mitochondrion inner membrane. Mitochondrial membrane ATP synthase (F(1)F(0) ATP synthase or Complex V) produces ATP from ADP in the presence of a proton gradient across the membrane which is generated by electron transport complexes of the respiratory chain. F-type ATPases consist of two structural domains, F(1) - containing the extramembraneous catalytic core, and F(0) - containing the membrane proton channel, linked together by a central stalk and a peripheral stalk. During catalysis, ATP synthesis in the catalytic domain of F(1) is coupled via a rotary mechanism of the central stalk subunits to proton translocation. Subunits alpha and beta form the catalytic core in F(1). Rotation of the central stalk against the surrounding alpha(3)beta(3) subunits leads to hydrolysis of ATP in three separate catalytic sites on the beta subunits. Subunit alpha does not bear the catalytic high-affinity ATP-binding sites. The protein is ATP synthase subunit alpha, mitochondrial (ATP1) of Kluyveromyces lactis (strain ATCC 8585 / CBS 2359 / DSM 70799 / NBRC 1267 / NRRL Y-1140 / WM37) (Yeast).